Here is a 264-residue protein sequence, read N- to C-terminus: Alkaline ceramidase 1 (264 aa).

At 1-27 (MPSIFAYQSSEVDWCESNFQYSELVAE) the chain is on the lumenal side. D13, W14, E16, N18, and E27 together coordinate Ca(2+). The helical transmembrane segment at 28-48 (FYNTFSNIPFFIFGPLMMLLM) threads the bilayer. The Cytoplasmic segment spans residues 49–57 (HPYAQKRSR). Residues 58 to 78 (YIYVVWVLFMIIGLFSMYFHM) form a helical membrane-spanning segment. H77 provides a ligand contact to Zn(2+). Residues 79–81 (TLS) are Lumenal-facing. A helical membrane pass occupies residues 82 to 102 (FLGQLLDEIAILWLLGSGYSI). The Cytoplasmic portion of the chain corresponds to 103–119 (WMPRCYFPSFLGGNRSQ). A helical transmembrane segment spans residues 120 to 137 (FIRLVFITTVVSTLLSFL). R138 is a topological domain (lumenal). A helical transmembrane segment spans residues 139–159 (PTVNAYALNSIALHILYIVCQ). Over 160–176 (EYRKTSNKELRHLIEVS) the chain is Cytoplasmic. Residues 177–197 (VVLWAVALTSWISDRLLCSFW) traverse the membrane as a helical segment. Residues 198-206 (QRIHFFYLH) are Lumenal-facing. Positions 206 and 210 each coordinate Zn(2+). Residues 207-227 (SIWHVLISITFPYGMVTMALV) traverse the membrane as a helical segment. At 228 to 264 (DANYEMPGETLKVRYWPRDSWPVGLPYVEIRGDDKDC) the chain is on the cytoplasmic side.

Belongs to the alkaline ceramidase family. Requires Zn(2+) as cofactor. In terms of tissue distribution, mainly expressed in epidermis.

It is found in the endoplasmic reticulum membrane. It carries out the reaction an N-acylsphing-4-enine + H2O = sphing-4-enine + a fatty acid. It catalyses the reaction N-tetracosanoyl-sphing-4-enine + H2O = tetracosanoate + sphing-4-enine. The enzyme catalyses an N-acylsphinganine + H2O = sphinganine + a fatty acid. The catalysed reaction is N-(9Z-octadecenoyl)-sphing-4-enine + H2O = sphing-4-enine + (9Z)-octadecenoate. It carries out the reaction N-(15Z-tetracosenoyl)-sphing-4-enine + H2O = (15Z)-tetracosenoate + sphing-4-enine. The protein operates within lipid metabolism; sphingolipid metabolism. Inhibited by sphingosine. Activity is Ca(2+)-dependent. In terms of biological role, endoplasmic reticulum ceramidase that catalyzes the hydrolysis of ceramides into sphingosine and free fatty acids at alkaline pH. Ceramides, sphingosine, and its phosphorylated form sphingosine-1-phosphate are bioactive lipids that mediate cellular signaling pathways regulating several biological processes including cell proliferation, apoptosis and differentiation. Exhibits a strong substrate specificity towards the natural stereoisomer of ceramides with D-erythro-sphingosine as a backbone and has a higher activity towards very long-chain unsaturated fatty acids like the C24:1-ceramide. May also hydrolyze dihydroceramides to produce dihydrosphingosine. ACER1 is a skin-specific ceramidase that regulates the levels of ceramides, sphingosine and sphingosine-1-phosphate in the epidermis, mediates the calcium-induced differentiation of epidermal keratinocytes and more generally plays an important role in skin homeostasis. The sequence is that of Alkaline ceramidase 1 from Homo sapiens (Human).